Reading from the N-terminus, the 193-residue chain is Segregation and condensation protein B (193 aa).

This sequence belongs to the ScpB family. As to quaternary structure, homodimer. Homodimerization may be required to stabilize the binding of ScpA to the Smc head domains. Component of a cohesin-like complex composed of ScpA, ScpB and the Smc homodimer, in which ScpA and ScpB bind to the head domain of Smc. The presence of the three proteins is required for the association of the complex with DNA.

It is found in the cytoplasm. Participates in chromosomal partition during cell division. May act via the formation of a condensin-like complex containing Smc and ScpA that pull DNA away from mid-cell into both cell halves. This chain is Segregation and condensation protein B, found in Clostridium botulinum (strain 657 / Type Ba4).